The chain runs to 137 residues: Large ribosomal subunit protein eL32 (137 aa).

The interval 95 to 137 is disordered; the sequence is PSAAEIATPVSSRKRIASSPARQADRCSRSRRSKFRPRRLRAS. A compositionally biased stretch (basic residues) spans 123 to 137; that stretch reads RSRRSKFRPRRLRAS.

It belongs to the eukaryotic ribosomal protein eL32 family.

In Trichoderma harzianum (Hypocrea lixii), this protein is Large ribosomal subunit protein eL32 (rpl32).